The sequence spans 423 residues: Imidazolonepropionase (423 aa).

His78 and His80 together coordinate Fe(3+). Residues His78 and His80 each coordinate Zn(2+). 4-imidazolone-5-propanoate-binding residues include Arg87, Tyr150, and His183. An N-formimidoyl-L-glutamate-binding site is contributed by Tyr150. Residue His247 coordinates Fe(3+). A Zn(2+)-binding site is contributed by His247. Glu250 serves as a coordination point for 4-imidazolone-5-propanoate. Asp322 contributes to the Fe(3+) binding site. Asp322 provides a ligand contact to Zn(2+). N-formimidoyl-L-glutamate contacts are provided by Asn324 and Gly326. Ser327 is a 4-imidazolone-5-propanoate binding site.

The protein belongs to the metallo-dependent hydrolases superfamily. HutI family. Zn(2+) is required as a cofactor. Requires Fe(3+) as cofactor.

It localises to the cytoplasm. It catalyses the reaction 4-imidazolone-5-propanoate + H2O = N-formimidoyl-L-glutamate. It participates in amino-acid degradation; L-histidine degradation into L-glutamate; N-formimidoyl-L-glutamate from L-histidine: step 3/3. Functionally, catalyzes the hydrolytic cleavage of the carbon-nitrogen bond in imidazolone-5-propanoate to yield N-formimidoyl-L-glutamate. It is the third step in the universal histidine degradation pathway. This is Imidazolonepropionase from Bacillus cereus (strain ATCC 14579 / DSM 31 / CCUG 7414 / JCM 2152 / NBRC 15305 / NCIMB 9373 / NCTC 2599 / NRRL B-3711).